Reading from the N-terminus, the 274-residue chain is Pantothenate synthetase (274 aa).

26–33 (MGNLHAGH) serves as a coordination point for ATP. The Proton donor role is filled by histidine 33. Glutamine 57 contacts (R)-pantoate. Glutamine 57 is a binding site for beta-alanine. 143–146 (GKKD) contacts ATP. Glutamine 149 contributes to the (R)-pantoate binding site. Residues valine 172 and 180 to 183 (LSSR) contribute to the ATP site.

It belongs to the pantothenate synthetase family. As to quaternary structure, homodimer.

It is found in the cytoplasm. The enzyme catalyses (R)-pantoate + beta-alanine + ATP = (R)-pantothenate + AMP + diphosphate + H(+). It functions in the pathway cofactor biosynthesis; (R)-pantothenate biosynthesis; (R)-pantothenate from (R)-pantoate and beta-alanine: step 1/1. In terms of biological role, catalyzes the condensation of pantoate with beta-alanine in an ATP-dependent reaction via a pantoyl-adenylate intermediate. The protein is Pantothenate synthetase of Dechloromonas aromatica (strain RCB).